The following is a 333-amino-acid chain: MLTYKEAGVNIEEGYRSVKLIKEYAKKTMSEYVLNGLGSFAGMIELPEGYKKPVLVSGTDGVGTKLDIACKKRKFDTVGIDCVAMCVNDILCHGAKPLFFLDYIACGKLEAEVSSDLVKGVAEGCIKSQCSLIGGETAEMPGMYKEGDYDIAGFAVGIVDKDKIINGKDIKSGDKLIGIASSGVHSNGYSLIRKVFKNLDEDFNGKAIWEELLTPTKIYVKPVLSLLEKFNIKGMAHVTGGGFYENLPRMLSKEGLSIVINKNSYEIPEIFKKLMELGVKEEEMYNTFNMGIGFVLCVEEDEVEEVLKELSKQGEKAFEIGYINAGGEGVCIK.

This sequence belongs to the AIR synthase family.

The protein localises to the cytoplasm. It catalyses the reaction 2-formamido-N(1)-(5-O-phospho-beta-D-ribosyl)acetamidine + ATP = 5-amino-1-(5-phospho-beta-D-ribosyl)imidazole + ADP + phosphate + H(+). The protein operates within purine metabolism; IMP biosynthesis via de novo pathway; 5-amino-1-(5-phospho-D-ribosyl)imidazole from N(2)-formyl-N(1)-(5-phospho-D-ribosyl)glycinamide: step 2/2. This chain is Phosphoribosylformylglycinamidine cyclo-ligase, found in Clostridium perfringens (strain 13 / Type A).